We begin with the raw amino-acid sequence, 468 residues long: Probable serine/threonine-protein phosphatase 2A activator 2 (468 aa).

Over residues 412-424 the composition is skewed to low complexity; sequence STTTNNNNNNITS. The disordered stretch occupies residues 412-468; sequence STTTNNNNNNITSGDHCNDNEQQCSETHNHDHNHNHNHNHNHPPPPPQQQRSYFPLD.

The protein belongs to the PTPA-type PPIase family.

It localises to the cytoplasm. The catalysed reaction is [protein]-peptidylproline (omega=180) = [protein]-peptidylproline (omega=0). Functionally, PPIases accelerate the folding of proteins. It catalyzes the cis-trans isomerization of proline imidic peptide bonds in oligopeptides. Acts as a regulatory subunit for PP2A-like phosphatases modulating their activity or substrate specificity, probably by inducing a conformational change in the catalytic subunit, a direct target of the PPIase. The chain is Probable serine/threonine-protein phosphatase 2A activator 2 (ppp2r4B) from Dictyostelium discoideum (Social amoeba).